A 137-amino-acid chain; its full sequence is Large ribosomal subunit protein uL16 (137 aa).

The protein belongs to the universal ribosomal protein uL16 family. In terms of assembly, part of the 50S ribosomal subunit.

Functionally, binds 23S rRNA and is also seen to make contacts with the A and possibly P site tRNAs. In Streptococcus equi subsp. zooepidemicus (strain H70), this protein is Large ribosomal subunit protein uL16.